A 289-amino-acid polypeptide reads, in one-letter code: MYG1 protein CT_386 (289 aa).

It belongs to the MYG1 family.

This is MYG1 protein CT_386 from Chlamydia trachomatis serovar D (strain ATCC VR-885 / DSM 19411 / UW-3/Cx).